Here is a 174-residue protein sequence, read N- to C-terminus: Secretion monitor (174 aa).

The first 35 residues, 1–35 (MGILNLWRQFGRRYFWSHLLLGVVAASIGAPTILA), serve as a signal peptide directing secretion.

This sequence belongs to the SecM family.

It is found in the cytoplasm. The protein localises to the cytosol. Its subcellular location is the periplasm. In terms of biological role, regulates secA expression by translational coupling of the secM secA operon. Translational pausing at a specific Pro residue 5 residues before the end of the protein may allow disruption of a mRNA repressor helix that normally suppresses secA translation initiation. In Photorhabdus laumondii subsp. laumondii (strain DSM 15139 / CIP 105565 / TT01) (Photorhabdus luminescens subsp. laumondii), this protein is Secretion monitor.